Here is a 323-residue protein sequence, read N- to C-terminus: uncharacterized protein (323 aa).

The first 45 residues, 1–45 (MLATLSQIRAWSTEHLIDAAGYWTETADRWEDVFLQMRNQAHAIA), serve as a signal peptide directing secretion. The tract at residues 186-227 (FKQDGPTPPPPGAPHPSGGADGPYSDPITSMMLPPAGTEAPV) is disordered. The next 2 membrane-spanning stretches (helical) occupy residues 269-289 (SAEW…VVGT) and 290-310 (ALAI…LLGV).

It is found in the cell membrane. This is an uncharacterized protein from Mycobacterium tuberculosis (strain CDC 1551 / Oshkosh).